The sequence spans 141 residues: Extracellular globin-1 (141 aa).

Positions 1-141 constitute a Globin domain; the sequence is DCNTLKRFKV…YAVIAAGIKP (141 aa). The cysteines at positions 2 and 131 are disulfide-linked. His94 provides a ligand contact to heme b.

This sequence belongs to the globin family. As to quaternary structure, the giant hemoglobins of worms are formed of a monomeric subunit and a disulfide-bonded trimer. This subunit is monomeric.

The protein localises to the secreted. In Metaphire sieboldi (Earthworm), this protein is Extracellular globin-1.